Reading from the N-terminus, the 393-residue chain is Fructose-bisphosphate aldolase 4, cytosolic (393 aa).

Position 73 (Arg73) interacts with substrate. Cys207 carries the S-glutathionyl cysteine; transient; alternate modification. Residue Cys207 is modified to S-nitrosocysteine; transient; alternate. The Proton acceptor role is filled by Glu217. The active-site Schiff-base intermediate with dihydroxyacetone-P is Lys259. Substrate is bound by residues 301–303 and Arg333; that span reads SGG.

It belongs to the class I fructose-bisphosphate aldolase family. Homotetramer. Post-translationally, S-glutathionylated at Cys-207. S-nitrosylated at Cys-207. As to expression, highly expressed in flowers.

It is found in the cytoplasm. The protein localises to the cytosol. The catalysed reaction is beta-D-fructose 1,6-bisphosphate = D-glyceraldehyde 3-phosphate + dihydroxyacetone phosphate. It functions in the pathway carbohydrate degradation; glycolysis; D-glyceraldehyde 3-phosphate and glycerone phosphate from D-glucose: step 4/4. Fructose-bisphosphate aldolase that plays a key role in glycolysis and gluconeogenesis. The sequence is that of Fructose-bisphosphate aldolase 4, cytosolic from Arabidopsis thaliana (Mouse-ear cress).